A 204-amino-acid polypeptide reads, in one-letter code: Recombination protein RecR (204 aa).

A C4-type zinc finger spans residues 63-78 (CNRCFNITVEDPCTIC). Residues 86–181 (RQVCVVEEPL…RVTRLARGLP (96 aa)) enclose the Toprim domain.

The protein belongs to the RecR family.

In terms of biological role, may play a role in DNA repair. It seems to be involved in an RecBC-independent recombinational process of DNA repair. It may act with RecF and RecO. The protein is Recombination protein RecR of Herpetosiphon aurantiacus (strain ATCC 23779 / DSM 785 / 114-95).